We begin with the raw amino-acid sequence, 160 residues long: Eukaryotic translation initiation factor 5A-2 (160 aa).

Residues 1 to 12 are compositionally biased toward basic and acidic residues; the sequence is MSDEEHHFESKA. A disordered region spans residues 1-21; it reads MSDEEHHFESKADAGASKTFP. K52 is modified (hypusine).

This sequence belongs to the eIF-5A family. Post-translationally, lys-52 undergoes hypusination, a unique post-translational modification that consists in the addition of a butylamino group from spermidine to lysine side chain, leading to the formation of the unusual amino acid hypusine. eIF-5As are the only known proteins to undergo this modification, which is essential for their function.

Functionally, translation factor that promotes translation elongation and termination, particularly upon ribosome stalling at specific amino acid sequence contexts. Binds between the exit (E) and peptidyl (P) site of the ribosome and promotes rescue of stalled ribosome: specifically required for efficient translation of polyproline-containing peptides as well as other motifs that stall the ribosome. Acts as a ribosome quality control (RQC) cofactor by joining the RQC complex to facilitate peptidyl transfer during CAT tailing step. In Solanum lycopersicum (Tomato), this protein is Eukaryotic translation initiation factor 5A-2.